Here is a 383-residue protein sequence, read N- to C-terminus: Putative glutamate--cysteine ligase 2-1 (383 aa).

The protein belongs to the glutamate--cysteine ligase type 2 family. YbdK subfamily.

The catalysed reaction is L-cysteine + L-glutamate + ATP = gamma-L-glutamyl-L-cysteine + ADP + phosphate + H(+). Functionally, ATP-dependent carboxylate-amine ligase which exhibits weak glutamate--cysteine ligase activity. The sequence is that of Putative glutamate--cysteine ligase 2-1 from Nocardia farcinica (strain IFM 10152).